The primary structure comprises 320 residues: Probable cell division protein WhiA (320 aa).

Positions 276 to 310 (TLKELGELVSGGKISKSGINHRLRKIDEIAERLRA) form a DNA-binding region, H-T-H motif.

The protein belongs to the WhiA family.

Involved in cell division and chromosome segregation. This is Probable cell division protein WhiA from Geobacillus sp. (strain WCH70).